A 44-amino-acid chain; its full sequence is Cytochrome b559 subunit beta (44 aa).

The chain crosses the membrane as a helical span at residues 19–35 (WLAIHGIAVPTIFFLGA). Position 23 (His-23) interacts with heme.

Belongs to the PsbE/PsbF family. In terms of assembly, heterodimer of an alpha subunit and a beta subunit. PSII is composed of 1 copy each of membrane proteins PsbA, PsbB, PsbC, PsbD, PsbE, PsbF, PsbH, PsbI, PsbJ, PsbK, PsbL, PsbM, PsbT, PsbX, PsbY, PsbZ, Psb30/Ycf12, at least 3 peripheral proteins of the oxygen-evolving complex and a large number of cofactors. It forms dimeric complexes. Heme b is required as a cofactor.

Its subcellular location is the plastid. It localises to the chloroplast thylakoid membrane. Its function is as follows. This b-type cytochrome is tightly associated with the reaction center of photosystem II (PSII). PSII is a light-driven water:plastoquinone oxidoreductase that uses light energy to abstract electrons from H(2)O, generating O(2) and a proton gradient subsequently used for ATP formation. It consists of a core antenna complex that captures photons, and an electron transfer chain that converts photonic excitation into a charge separation. The sequence is that of Cytochrome b559 subunit beta from Chlamydomonas reinhardtii (Chlamydomonas smithii).